The primary structure comprises 117 residues: Large ribosomal subunit protein uL18 (117 aa).

It belongs to the universal ribosomal protein uL18 family. In terms of assembly, part of the 50S ribosomal subunit; part of the 5S rRNA/L5/L18/L25 subcomplex. Contacts the 5S and 23S rRNAs.

Its function is as follows. This is one of the proteins that bind and probably mediate the attachment of the 5S RNA into the large ribosomal subunit, where it forms part of the central protuberance. The protein is Large ribosomal subunit protein uL18 of Coxiella burnetii (strain CbuK_Q154) (Coxiella burnetii (strain Q154)).